A 72-amino-acid polypeptide reads, in one-letter code: uncharacterized protein (72 aa).

This is an uncharacterized protein from Bacillus subtilis (strain 168).